A 643-amino-acid polypeptide reads, in one-letter code: Alpha-dioxygenase PIOX (643 aa).

Residue H168 is the Proton acceptor of the active site. D169 is a Ca(2+) binding site. H173 is a heme b binding site. 4 residues coordinate Ca(2+): T221, W223, D225, and S227. Heme b is bound by residues H393, R490, and R494.

It belongs to the peroxidase family. Heme b serves as cofactor. It depends on Ca(2+) as a cofactor.

It catalyses the reaction hexadecanoate + O2 = (2R)-2-hydroperoxyhexadecanoate. The catalysed reaction is dodecanoate + O2 = (2R)-2-hydroperoxydodecanoate. Functionally, alpha-dioxygenase that catalyzes the primary oxygenation step of a variety of 14-20 carbon fatty acids, containing up to three unsaturated bonds, into their corresponding 2R-hydroperoxides. Involved in the production of oxylipins that function in cell signaling, wound healing, and protection from infection. The alpha-oxidation pathway of fatty acids may play a role during plant developmental processes. The sequence is that of Alpha-dioxygenase PIOX from Pisum sativum (Garden pea).